A 131-amino-acid chain; its full sequence is MAPSLWKGLVGVGLFALAHAAFSAAQHRSYMRLTEKEDESLPIDIVLQTLLAFAVTCYGIVHIAGEFKDMDATSELKNKTFDTLRNHPSFYVFNHRGRVLFRPSDATNSSNLDALSSNTSLKLRKFDSLRR.

Over 1-3 (MAP) the chain is Cytoplasmic. Residues 4–22 (SLWKGLVGVGLFALAHAAF) form a helical membrane-spanning segment. Over 23 to 43 (SAAQHRSYMRLTEKEDESLPI) the chain is Lumenal. The chain crosses the membrane as a helical span at residues 44 to 63 (DIVLQTLLAFAVTCYGIVHI). Residues 64 to 131 (AGEFKDMDAT…KLRKFDSLRR (68 aa)) lie on the Cytoplasmic side of the membrane. Ser-120 is modified (phosphoserine).

It belongs to the membrane magnesium transporter (TC 1.A.67) family. As to quaternary structure, component of the ER membrane protein complex (EMC). As to expression, abundant in heart muscle and kidney with lower levels in liver and brain and very little expression in intestine or colon. In kidney, highest levels in distal convoluted tubule.

It localises to the endoplasmic reticulum membrane. Its subcellular location is the golgi apparatus membrane. The protein localises to the early endosome membrane. Part of the endoplasmic reticulum membrane protein complex (EMC) that enables the energy-independent insertion into endoplasmic reticulum membranes of newly synthesized membrane proteins. Preferentially accommodates proteins with transmembrane domains that are weakly hydrophobic or contain destabilizing features such as charged and aromatic residues. Involved in the cotranslational insertion of multi-pass membrane proteins in which stop-transfer membrane-anchor sequences become ER membrane spanning helices. It is also required for the post-translational insertion of tail-anchored/TA proteins in endoplasmic reticulum membranes. By mediating the proper cotranslational insertion of N-terminal transmembrane domains in an N-exo topology, with translocated N-terminus in the lumen of the ER, controls the topology of multi-pass membrane proteins like the G protein-coupled receptors. By regulating the insertion of various proteins in membranes, it is indirectly involved in many cellular processes. May be involved Mg(2+) transport. The protein is ER membrane protein complex subunit 5 of Mus musculus (Mouse).